The chain runs to 403 residues: S-adenosylmethionine synthase (403 aa).

Position 17 (H17) interacts with ATP. Mg(2+) is bound at residue D19. K(+) is bound at residue E45. Residues E58 and Q104 each coordinate L-methionine. The interval 104 to 114 is flexible loop; sequence QSPDIAQGVDT. ATP is bound by residues 179 to 181, 250 to 251, D259, 265 to 266, A282, and K286; these read DGK, KF, and RK. Position 259 (D259) interacts with L-methionine. K290 is a binding site for L-methionine.

The protein belongs to the AdoMet synthase family. In terms of assembly, homotetramer; dimer of dimers. It depends on Mg(2+) as a cofactor. Requires K(+) as cofactor.

Its subcellular location is the cytoplasm. It catalyses the reaction L-methionine + ATP + H2O = S-adenosyl-L-methionine + phosphate + diphosphate. The protein operates within amino-acid biosynthesis; S-adenosyl-L-methionine biosynthesis; S-adenosyl-L-methionine from L-methionine: step 1/1. Functionally, catalyzes the formation of S-adenosylmethionine (AdoMet) from methionine and ATP. The overall synthetic reaction is composed of two sequential steps, AdoMet formation and the subsequent tripolyphosphate hydrolysis which occurs prior to release of AdoMet from the enzyme. This is S-adenosylmethionine synthase from Mycobacterium bovis (strain ATCC BAA-935 / AF2122/97).